Reading from the N-terminus, the 614-residue chain is Kelch-like protein 40 (614 aa).

The region spanning 33–100 (IDCVLKIQGK…IYTSEIEITE (68 aa)) is the BTB domain. The BACK domain maps to 135-237 (CLAIFRLGLL…PQDYIKNKVE (103 aa)). 5 Kelch repeats span residues 353 to 405 (QLFV…ESDN), 406 to 455 (SIYL…SHDN), 456 to 503 (LVYV…VHKG), 505 to 550 (ILIA…SMNG), and 552 to 606 (LYAI…AARL).

It belongs to the KLHL40 family. In terms of assembly, component of the BCR(KLHL40) E3 ubiquitin ligase complex.

It localises to the cytoplasm. It is found in the myofibril. The protein resides in the sarcomere. The protein localises to the a band. Its subcellular location is the i band. Its function is as follows. Substrate-specific adapter of a BCR (BTB-CUL3-RBX1) E3 ubiquitin ligase complex that acts as a key regulator of skeletal muscle development. This chain is Kelch-like protein 40 (klhl40), found in Xenopus tropicalis (Western clawed frog).